Here is a 737-residue protein sequence, read N- to C-terminus: Glycogen [starch] synthase, muscle (737 aa).

The residue at position 8 (Ser-8) is a Phosphoserine; by AMPK and PKA. Residue Ser-11 is modified to Phosphoserine. Lys-39 is a UDP binding site. 2 residues coordinate UDP-alpha-D-glucose: His-205 and Arg-211. The alpha-D-glucose 6-phosphate site is built by His-291, Glu-292, Gln-294, His-297, and Lys-301. Residue Arg-331 participates in UDP binding. Residue Arg-331 participates in UDP-alpha-D-glucose binding. Ser-412 carries the post-translational modification Phosphoserine. His-501 contributes to the alpha-D-glucose 6-phosphate binding site. 3 residues coordinate UDP-alpha-D-glucose: Glu-510, Trp-512, and Gly-513. Thr-515 contributes to the UDP binding site. The alpha-D-glucose 6-phosphate site is built by Arg-582 and Arg-586. The tract at residues 634 to 737 (YRYPRPASVP…PTSSLGEERN (104 aa)) is disordered. Ser-641 bears the Phosphoserine; by DYRK2, GSK3-alpha, GSK3-beta and PASK mark. Residues Ser-645 and Ser-649 each carry the phosphoserine; by GSK3-alpha and GSK3-beta modification. At Ser-652 the chain carries Phosphoserine. The residue at position 653 (Ser-653) is a Phosphoserine; by GSK3-alpha and GSK3-beta. At Ser-657 the chain carries Phosphoserine; by CK2. Positions 658-681 (EDEEDPRNGPLEEDSERYDEDEEA) are enriched in acidic residues. A Phosphoserine modification is found at Ser-672. Positions 682–695 (AKDRRNIRAPEWPR) are enriched in basic and acidic residues. The residue at position 698 (Ser-698) is a Phosphoserine. Polar residues predominate over residues 698 to 714 (SCTSSTSGSKRNSVDTA). A Phosphothreonine modification is found at Thr-700. Ser-710 bears the Phosphoserine mark. Positions 715–737 (TSSSLSTPSEPLSPTSSLGEERN) are enriched in low complexity. Thr-721 is subject to Phosphothreonine. Phosphoserine is present on residues Ser-727 and Ser-731.

The protein belongs to the glycosyltransferase 3 family. As to quaternary structure, part of the GYS1-GYG1 complex, a heterooctamer composed of a tetramer of GYS1 and 2 dimers of GYG1, where each GYS1 protomer binds to one GYG1 subunit (via GYG1 C-terminus); the GYS1 tetramer may dissociate from GYG1 dimers to continue glycogen polymerization on its own. In terms of processing, phosphorylation at Ser-8 by AMPK inactivates the enzyme activity. Primed phosphorylation at Ser-657 (site 5) by CSNK2A1 and CSNK2A2 is required for inhibitory phosphorylation at Ser-641 (site 3a), Ser-645 (site 3b), Ser-649 (site 3c) and Ser-653 (site 4) by GSK3A an GSK3B. Phosphorylated at Ser-641 by PASK, leading to inactivation; phosphorylation by PASK is inhibited by glycogen. Phosphorylated at Ser-641 by DYRK2, leading to inactivation. Dephosphorylation at Ser-641 and Ser-645 by PP1 activates the enzyme.

It catalyses the reaction [(1-&gt;4)-alpha-D-glucosyl](n) + UDP-alpha-D-glucose = [(1-&gt;4)-alpha-D-glucosyl](n+1) + UDP + H(+). It participates in glycan biosynthesis; glycogen biosynthesis. Allosteric activation by glucose-6-phosphate. Phosphorylation reduces the activity towards UDP-glucose. When in the non-phosphorylated state, glycogen synthase does not require glucose-6-phosphate as an allosteric activator; when phosphorylated it does. Functionally, glycogen synthase participates in the glycogen biosynthetic process along with glycogenin and glycogen branching enzyme. Extends the primer composed of a few glucose units formed by glycogenin by adding new glucose units to it. In this context, glycogen synthase transfers the glycosyl residue from UDP-Glc to the non-reducing end of alpha-1,4-glucan. This chain is Glycogen [starch] synthase, muscle (GYS1), found in Macaca mulatta (Rhesus macaque).